Reading from the N-terminus, the 638-residue chain is tRNA uridine 5-carboxymethylaminomethyl modification enzyme MnmG (638 aa).

FAD-binding positions include 13-18 (GGGHAG), valine 125, and serine 180. Position 273 to 287 (273 to 287 (GPRYCPSIEDKIHRF)) interacts with NAD(+). Glutamine 370 provides a ligand contact to FAD.

This sequence belongs to the MnmG family. As to quaternary structure, homodimer. Heterotetramer of two MnmE and two MnmG subunits. It depends on FAD as a cofactor.

The protein localises to the cytoplasm. In terms of biological role, NAD-binding protein involved in the addition of a carboxymethylaminomethyl (cmnm) group at the wobble position (U34) of certain tRNAs, forming tRNA-cmnm(5)s(2)U34. This Cellvibrio japonicus (strain Ueda107) (Pseudomonas fluorescens subsp. cellulosa) protein is tRNA uridine 5-carboxymethylaminomethyl modification enzyme MnmG.